The chain runs to 470 residues: Uronate isomerase (470 aa).

The protein belongs to the metallo-dependent hydrolases superfamily. Uronate isomerase family.

The catalysed reaction is D-glucuronate = D-fructuronate. It catalyses the reaction aldehydo-D-galacturonate = keto-D-tagaturonate. It functions in the pathway carbohydrate metabolism; pentose and glucuronate interconversion. This Cronobacter sakazakii (strain ATCC BAA-894) (Enterobacter sakazakii) protein is Uronate isomerase.